A 667-amino-acid chain; its full sequence is Phosphomethylpyrimidine synthase (667 aa).

Residues N235, M264, Y293, H329, 349 to 351 (SRG), 390 to 393 (DGMR), and E429 each bind substrate. A Zn(2+)-binding site is contributed by H433. Y456 provides a ligand contact to substrate. Residue H497 coordinates Zn(2+). Positions 577, 580, and 585 each coordinate [4Fe-4S] cluster. Residues 618–642 (DSYTGSESDTAKRASQREQGMAQMS) are disordered.

Belongs to the ThiC family. In terms of assembly, homodimer. It depends on [4Fe-4S] cluster as a cofactor.

The enzyme catalyses 5-amino-1-(5-phospho-beta-D-ribosyl)imidazole + S-adenosyl-L-methionine = 4-amino-2-methyl-5-(phosphooxymethyl)pyrimidine + CO + 5'-deoxyadenosine + formate + L-methionine + 3 H(+). It participates in cofactor biosynthesis; thiamine diphosphate biosynthesis. Its function is as follows. Catalyzes the synthesis of the hydroxymethylpyrimidine phosphate (HMP-P) moiety of thiamine from aminoimidazole ribotide (AIR) in a radical S-adenosyl-L-methionine (SAM)-dependent reaction. In Shewanella pealeana (strain ATCC 700345 / ANG-SQ1), this protein is Phosphomethylpyrimidine synthase.